The chain runs to 283 residues: Stage II sporulation protein Q (283 aa).

The helical transmembrane segment at 22–42 threads the bilayer; the sequence is WVFPAIYLVSAAVILTAVLWY. Residues 228 to 283 form a disordered region; it reads EKAATQETEESIQQSSEKKDGSTEKGTEEKSGEKKDDSTDKSGSKESSTTEDTEQS. The segment covering 243–271 has biased composition (basic and acidic residues); that stretch reads SEKKDGSTEKGTEEKSGEKKDDSTDKSGS.

Interacts with SpoIIIAH and SpoIIE.

The protein localises to the forespore membrane. In terms of biological role, involved in forespore engulfment and required for anchoring membrane proteins on the forespore side of the septal membrane. Forms a channel with SpoIIIAH that is open on the forespore end and closed (or gated) on the mother cell end. This allows sigma-E-directed gene expression in the mother-cell compartment of the sporangium to trigger the activation of sigma-G forespore-specific gene expression by a pathway of intercellular signaling. The sequence is that of Stage II sporulation protein Q (spoIIQ) from Bacillus subtilis (strain 168).